We begin with the raw amino-acid sequence, 252 residues long: Cell division protein ZapD (252 aa).

This sequence belongs to the ZapD family. As to quaternary structure, interacts with FtsZ.

It is found in the cytoplasm. Cell division factor that enhances FtsZ-ring assembly. Directly interacts with FtsZ and promotes bundling of FtsZ protofilaments, with a reduction in FtsZ GTPase activity. The polypeptide is Cell division protein ZapD (Cupriavidus pinatubonensis (strain JMP 134 / LMG 1197) (Cupriavidus necator (strain JMP 134))).